Reading from the N-terminus, the 206-residue chain is MFITLEGGEGVGKTTQQALLVERLRQEGYACLCTREPGGTALGKTLRELLLHGDPFSPLAELLLYAADRAEHVSKVIAPALAAGQVVVCDRFTDSTLAYQGYGRGLDLEKIRQLNHLATGGLQPHLTLWLDLPPEVGLARAKARDRLEQERLEFHRRVYQGFQALAAAEPQRIVRISAQGSPAEVAARLWSVVEPRLPLATAGREP.

7–14 serves as a coordination point for ATP; that stretch reads GGEGVGKT.

This sequence belongs to the thymidylate kinase family.

It catalyses the reaction dTMP + ATP = dTDP + ADP. Phosphorylation of dTMP to form dTDP in both de novo and salvage pathways of dTTP synthesis. In Synechococcus sp. (strain JA-2-3B'a(2-13)) (Cyanobacteria bacterium Yellowstone B-Prime), this protein is Thymidylate kinase.